A 208-amino-acid chain; its full sequence is MPQFFRTQPLTDRTTSHGFAEVSSEDHCYCVWLVPAISSDIELRYRTFVDWAVCHKVDFEEMQLPTAPHITLARGIKLKPNQSFKSVLQYIASKRKSPLNIKFGKVAIGDSFYKRVYIQVEKTPGLEELQNAAYDLADTSDPFNVIEHPYMPVIYAKSICSDYSTSDPIETISSIGQASWGKACFLELIQLNKANHQGYVCDRIEFTV.

This is an uncharacterized protein from Schizosaccharomyces pombe (strain 972 / ATCC 24843) (Fission yeast).